The sequence spans 138 residues: U1 small nuclear ribonucleoprotein C (138 aa).

The Matrin-type zinc-finger motif lies at 4 to 36 (FYCDYCDTYLTHDSPSVRKTHCSGRKHKENVRD). Phosphotyrosine is present on Tyr-8. Residue Ser-17 is modified to Phosphoserine. At Lys-52 the chain carries N6-acetyllysine. A disordered region spans residues 62–99 (IPPNLFSAPPLGGPMIPPPHPSMMGPPPPGMMPVGPPP). A compositionally biased stretch (pro residues) spans 72 to 99 (LGGPMIPPPHPSMMGPPPPGMMPVGPPP).

Belongs to the U1 small nuclear ribonucleoprotein C family. Component of the U1 snRNP. The U1 snRNP is composed of the U1 snRNA and the 7 core Sm proteins SNRPB, SNRPD1, SNRPD2, SNRPD3, SNRPE, SNRPF and SNRPG that assemble in a heptameric protein ring on the Sm site of the small nuclear RNA to form the core snRNP, and at least 3 U1 snRNP-specific proteins SNRNP70/U1-70K, SNRPA/U1-A and SNRPC/U1-C. SNRPC/U1-C interacts with U1 snRNA and the 5' splice-site region of the pre-mRNA. Interacts (via N-terminus) with TIA1 (via C-terminus); thereby promoting spliceosomal U1 snRNP recruitment to 5' splice sites.

The protein resides in the nucleus. Its function is as follows. Component of the spliceosomal U1 snRNP, which is essential for recognition of the pre-mRNA 5' splice-site and the subsequent assembly of the spliceosome. SNRPC/U1-C is directly involved in initial 5' splice-site recognition for both constitutive and regulated alternative splicing. The interaction with the 5' splice-site seems to precede base-pairing between the pre-mRNA and the U1 snRNA. Stimulates commitment or early (E) complex formation by stabilizing the base pairing of the 5' end of the U1 snRNA and the 5' splice-site region. This is U1 small nuclear ribonucleoprotein C from Monodelphis domestica (Gray short-tailed opossum).